The sequence spans 916 residues: MLVRTALRLIFGSQHERDLKNLLPLLNAVNAQESWVLPLQESEFKQKTAEFKARAAAGEALDAFLPQAFALAREAARRVLGERPYDVQILGSLVLHHGKIVEMKTGEGKTLMSVAAAYLNSLSGRGVHIVTVNDYLAERDARWMRPVYDYLGVSVGVILSSMGSQERRCAYACDITYGTNNELGFDYLRDNMQFLTEEKTQRDFYFAIIDEIDSILIDEARTPLIISGPAENDTQHYAEVDRLVGQLQEVERNPATGDYPNEVDGEEVRGDYIVDEKNRKVSFSGPGMLHIQDVLTHAGLIQGSLFDEENFKYIHYFTQALRAHLLYRADVDYVVKDGQVQIVDEFTGRILEGRRYSDGLHQAIEAKEHIRIAQRNRTMATITFQNFFRMYKKLSGMTGTADTEALELNKIYKLEVVVLPTNLPVARVDEHDVVYLSEEEKWSAICDEIKEAHTRGQPVLVGTISIEKSEKLSALLRTRGVKHEVLNAKNHAREALIIAEAGAKGSVTIATNMAGRGTDIKLGGNPEFRARQSATAIASKHGSSSVTVQEHMQACYEAEYTRWRADYEEVKQLGGLYVIGTERHESRRIDNQLRGRSGRQGDPGRSKFFLSLDDDLMRIFGGERLKRFMSRVGMEPGEPITHSWLNKSIERAQTKVEARNFDVRKHLLEYDDVLNEQRSFIYAQRAQILIDEHVVERVYTTIEEYLNREITALRQELKRRGRLSLGAFQQNLSTLFDYALGGEDASGWNETRLGTLKQEILAHLKKNIESKYLLAGAQNMDTFIRYQYVQAIDKKWLDHLELLEILRESVYLRSYGQKNPLTEYKLEGFDLFYTMLDDIRLSIASQVVRVTVHMEEQRVPRPPHVAQAAHEFQALGQPGRGHGSLSALPIQAGAKVGRNTPCPCGSGKKYKHCCGR.

ATP is bound by residues glutamine 88, 106–110 (GEGKT), and aspartate 519. 4 residues coordinate Zn(2+): cysteine 902, cysteine 904, cysteine 913, and cysteine 914.

Belongs to the SecA family. Monomer and homodimer. Part of the essential Sec protein translocation apparatus which comprises SecA, SecYEG and auxiliary proteins SecDF. Other proteins may also be involved. It depends on Zn(2+) as a cofactor.

Its subcellular location is the cell inner membrane. It localises to the cytoplasm. It catalyses the reaction ATP + H2O + cellular proteinSide 1 = ADP + phosphate + cellular proteinSide 2.. In terms of biological role, part of the Sec protein translocase complex. Interacts with the SecYEG preprotein conducting channel. Has a central role in coupling the hydrolysis of ATP to the transfer of proteins into and across the cell membrane, serving as an ATP-driven molecular motor driving the stepwise translocation of polypeptide chains across the membrane. The polypeptide is Protein translocase subunit SecA (Treponema pallidum (strain Nichols)).